The following is a 262-amino-acid chain: Hemin import ATP-binding protein HmuV (262 aa).

One can recognise an ABC transporter domain in the interval 3 to 244 (LQARNLTLAR…DHMRRVYGIE (242 aa)). ATP is bound at residue 35 to 42 (GANGAGKS).

Belongs to the ABC transporter superfamily. Heme (hemin) importer (TC 3.A.1.14.5) family. As to quaternary structure, the complex is composed of two ATP-binding proteins (HmuV), two transmembrane proteins (HmuU) and a solute-binding protein (HmuT).

It localises to the cell inner membrane. Functionally, part of the ABC transporter complex HmuTUV involved in hemin import. Responsible for energy coupling to the transport system. The chain is Hemin import ATP-binding protein HmuV from Bordetella pertussis (strain Tohama I / ATCC BAA-589 / NCTC 13251).